Consider the following 368-residue polypeptide: Phosphoribosylformylglycinamidine cyclo-ligase (368 aa).

The protein belongs to the AIR synthase family.

Its subcellular location is the cytoplasm. It carries out the reaction 2-formamido-N(1)-(5-O-phospho-beta-D-ribosyl)acetamidine + ATP = 5-amino-1-(5-phospho-beta-D-ribosyl)imidazole + ADP + phosphate + H(+). Its pathway is purine metabolism; IMP biosynthesis via de novo pathway; 5-amino-1-(5-phospho-D-ribosyl)imidazole from N(2)-formyl-N(1)-(5-phospho-D-ribosyl)glycinamide: step 2/2. This Novosphingobium aromaticivorans (strain ATCC 700278 / DSM 12444 / CCUG 56034 / CIP 105152 / NBRC 16084 / F199) protein is Phosphoribosylformylglycinamidine cyclo-ligase.